The following is a 282-amino-acid chain: Homeobox protein CDX-4 (282 aa).

Disordered stretches follow at residues 13–36 and 98–156; these read MYPG…GGSG and MNDM…SPYA. A compositionally biased stretch (low complexity) spans 20–29; the sequence is SPGGSSTAGV. Polar residues-rich tracts occupy residues 110-124 and 133-148; these read DYST…SNGG and SLVS…TSPS. Residues 171-230 constitute a DNA-binding region (homeobox); sequence KEKYRVVYTDHQRLELEKEFHCNRYITIRRKSELAVNLGLSERQVKIWFQNRRAKERKMI.

It belongs to the Caudal homeobox family.

Its subcellular location is the nucleus. In Mus musculus (Mouse), this protein is Homeobox protein CDX-4 (Cdx4).